The sequence spans 507 residues: Pre-glycoprotein polyprotein GP complex (507 aa).

The N-myristoyl glycine; by host moiety is linked to residue Gly-2. Residues 2–17 (GQVVTFLQSLPEVINE) are Extracellular-facing. The chain crosses the membrane as a helical span at residues 18-33 (AINIALIAISIICILK). Topologically, residues 34-58 (GLVNFWKCGVVQLAIFLCLAGRKCD) are cytoplasmic. Residue Cys-57 participates in Zn(2+) binding. The Extracellular segment spans residues 59 to 445 (GLMIDRRHEL…QGKTPIALTD (387 aa)). Cystine bridges form between Cys-86-Cys-247, Cys-292-Cys-305, Cys-314-Cys-323, and Cys-377-Cys-398. Asn-89, Asn-111, Asn-179, and Asn-240 each carry an N-linked (GlcNAc...) asparagine; by host glycan. N-linked (GlcNAc...) asparagine; by host glycans are attached at residues Asn-378, Asn-386, Asn-403, and Asn-408. The chain crosses the membrane as a helical span at residues 446–466 (ICFWSLVFFTSTVFLQLVGIP). Residues 467-507 (THRHLVGEGCPKPHRITSNSLCACGYYKIPKRPTRWVRKGK) are Cytoplasmic-facing. Residues His-468, His-470, Cys-476, His-480, Cys-488, and Cys-490 each contribute to the Zn(2+) site.

This sequence belongs to the arenaviridae GPC protein family. As to quaternary structure, interacts with glycoprotein G2. Part of the GP complex (GP-C) together with glycoprotein G1 and glycoprotein G2. The GP-complex interacts with protein Z, which interacts with ribonucleocapsid; these interactions may induce virion budding. In terms of assembly, homotrimer; disulfide-linked. In pre-fusion state, G1 homotrimers bind G2 homotrimers via ionic interactions. Part of the GP complex (GP-C) together with glycoprotein G2 and the stable signal peptide. The GP-complex interacts with protein Z, which interacts with ribonucleocapsid; these interactions may induce virion budding. Homotrimer. Interacts with the stable signal peptide. In pre-fusion state, G2 homotrimers bind G1 homotrimers via ionic interactions. Part of the GP complex (GP-C) together with glycoprotein G1 and the stable signal peptide. Acidification in the endosome triggers rearrangements, which ultimately leads to a 6 helix bundle formed by the two heptad repeat domains (HR1 and HR2) in post-fusion state. The GP-complex interacts with protein Z, which interacts with ribonucleocapsid; these interactions may induce virion budding. In terms of processing, specific enzymatic cleavages in vivo yield mature proteins. GP-C polyprotein is cleaved in the endoplasmic reticulum by the host protease MBTPS1. Only cleaved glycoprotein is incorporated into virions. Post-translationally, the SSP remains stably associated with the GP complex following cleavage by signal peptidase and plays crucial roles in the trafficking of GP through the secretory pathway. Myristoylation is necessary for GP2-mediated fusion activity.

Its subcellular location is the virion membrane. The protein resides in the host endoplasmic reticulum membrane. It is found in the host Golgi apparatus membrane. The protein localises to the host cell membrane. Its function is as follows. Functions as a cleaved signal peptide that is retained as the third component of the GP complex (GP-C). Helps to stabilize the spike complex in its native conformation. The SSP is required for efficient glycoprotein expression, post-translational maturation cleavage of G1 and G2, glycoprotein transport to the cell surface plasma membrane, formation of infectious virus particles, and acid pH-dependent glycoprotein-mediated cell fusion. Functionally, forms the virion spikes together with glycoprotein G2. The glycoprotein spike trimers are connected to the underlying matrix. Interacts with the host receptor leading to virus endocytosis. In terms of biological role, forms the virion spikes together with glycoprotein G1. The glycoprotein spike trimers are connected to the underlying matrix. Class I viral fusion protein that directs fusion of viral and host endosomal membranes, leading to delivery of the nucleocapsid into the cytoplasm. Membrane fusion is mediated by irreversible conformational changes induced by acidification. The polypeptide is Pre-glycoprotein polyprotein GP complex (Allpahuayo mammarenavirus (isolate Rat/Peru/CLHP-2472/1997) (ALLV)).